Here is a 115-residue protein sequence, read N- to C-terminus: Tyrosine-protein phosphatase 18 (115 aa).

The 115-residue stretch at 1 to 115 (WLMIVEQKCR…ETGSDAPMVV (115 aa)) folds into the Tyrosine-protein phosphatase domain. Asp83 is a substrate binding site.

The protein belongs to the protein-tyrosine phosphatase family.

The enzyme catalyses O-phospho-L-tyrosyl-[protein] + H2O = L-tyrosyl-[protein] + phosphate. This Styela plicata (Wrinkled sea squirt) protein is Tyrosine-protein phosphatase 18 (STY-18).